Here is a 72-residue protein sequence, read N- to C-terminus: Protein SlyX homolog (72 aa).

It belongs to the SlyX family.

The protein is Protein SlyX homolog of Bradyrhizobium diazoefficiens (strain JCM 10833 / BCRC 13528 / IAM 13628 / NBRC 14792 / USDA 110).